Consider the following 356-residue polypeptide: MTRQTTSQTCLICGDSADSLHFGALSCRACAAFFRRKVAGRRNIFRRCDRQCKVDTGMRKLCASCRYDKCLKVGMRESAVLSRLAKKNQNYKKSIVGSPDAYEPSTSTSDSVLENLQSAYHKLEETRKRVFNISETHVSQCCNYKRMNDVFFEDIKLVMEHLLETFKKSDISQEQEKLLCVHFMVPFILFEGGYKSTNSDLFYLPSGDFIDENRIEEYYSNPDDQNDNSAKSAAEVFRPYWKLNKQTLKTHLDDVQLDLPEFLFITALIYFDDGLLDQNEECIEVCKQMKAKIIEELTDYEKNVRINEDHSYRVGQIIMVLHGIQRTMNMIHETKEISLVYNVYDMHSSIFGNMAE.

Positions 7–82 (SQTCLICGDS…VGMRESAVLS (76 aa)) form a DNA-binding region, nuclear receptor. The NR C4-type zinc finger occupies 10 to 30 (CLICGDSADSLHFGALSCRAC). The segment at 48–70 (CDRQCKVDTGMRKLCASCRYDKC) adopts an NR C4-type; atypical zinc-finger fold. The NR LBD domain occupies 108 to 356 (TSDSVLENLQ…HSSIFGNMAE (249 aa)).

Belongs to the nuclear hormone receptor family.

Its subcellular location is the nucleus. In terms of biological role, orphan nuclear receptor. The polypeptide is Nuclear hormone receptor family member nhr-42 (nhr-42) (Caenorhabditis elegans).